A 310-amino-acid chain; its full sequence is 4-diphosphocytidyl-2-C-methyl-D-erythritol kinase (310 aa).

K12 is a catalytic residue. Position 97-107 (97-107 (PIGAGLAGGSS)) interacts with ATP. D139 is an active-site residue.

It belongs to the GHMP kinase family. IspE subfamily.

The catalysed reaction is 4-CDP-2-C-methyl-D-erythritol + ATP = 4-CDP-2-C-methyl-D-erythritol 2-phosphate + ADP + H(+). It participates in isoprenoid biosynthesis; isopentenyl diphosphate biosynthesis via DXP pathway; isopentenyl diphosphate from 1-deoxy-D-xylulose 5-phosphate: step 3/6. Its function is as follows. Catalyzes the phosphorylation of the position 2 hydroxy group of 4-diphosphocytidyl-2C-methyl-D-erythritol. The chain is 4-diphosphocytidyl-2-C-methyl-D-erythritol kinase from Synechococcus sp. (strain CC9311).